The chain runs to 253 residues: Imidazole glycerol phosphate synthase subunit HisF (253 aa).

Catalysis depends on residues aspartate 11 and aspartate 130.

This sequence belongs to the HisA/HisF family. Heterodimer of HisH and HisF.

The protein resides in the cytoplasm. The catalysed reaction is 5-[(5-phospho-1-deoxy-D-ribulos-1-ylimino)methylamino]-1-(5-phospho-beta-D-ribosyl)imidazole-4-carboxamide + L-glutamine = D-erythro-1-(imidazol-4-yl)glycerol 3-phosphate + 5-amino-1-(5-phospho-beta-D-ribosyl)imidazole-4-carboxamide + L-glutamate + H(+). It functions in the pathway amino-acid biosynthesis; L-histidine biosynthesis; L-histidine from 5-phospho-alpha-D-ribose 1-diphosphate: step 5/9. In terms of biological role, IGPS catalyzes the conversion of PRFAR and glutamine to IGP, AICAR and glutamate. The HisF subunit catalyzes the cyclization activity that produces IGP and AICAR from PRFAR using the ammonia provided by the HisH subunit. This is Imidazole glycerol phosphate synthase subunit HisF from Dehalococcoides mccartyi (strain ATCC BAA-2100 / JCM 16839 / KCTC 5957 / BAV1).